The following is a 145-amino-acid chain: Probable WRKY transcription factor 75 (145 aa).

Residues 20 to 38 (SKPELHQGEEESSKVRSEG) are compositionally biased toward basic and acidic residues. Residues 20 to 55 (SKPELHQGEEESSKVRSEGCSKSVESSKKKGKKQRY) form a disordered region. Residues 61-126 (SQVDILDDGY…YEGVHSHPIE (66 aa)) constitute a DNA-binding region (WRKY).

This sequence belongs to the WRKY group II-c family.

Its subcellular location is the nucleus. Functionally, transcription factor. Interacts specifically with the W box (5'-(T)TGAC[CT]-3'), a frequently occurring elicitor-responsive cis-acting element. In Arabidopsis thaliana (Mouse-ear cress), this protein is Probable WRKY transcription factor 75 (WRKY75).